The primary structure comprises 551 residues: Membrane protein insertase YidC (551 aa).

The chain crosses the membrane as a helical span at residues 3-23 (ANHIRILLLVTIAIMFISLMG). Polar residues predominate over residues 33 to 47 (NTKQQTSATQNNSHY). A disordered region spans residues 33 to 59 (NTKQQTSATQNNSHYDNADSSTNTDVT). Positions 50-59 (ADSSTNTDVT) are enriched in low complexity. A run of 3 helical transmembrane segments spans residues 361 to 381 (LVGN…LIFY), 431 to 451 (LSGC…YWVL), and 504 to 524 (VMMF…SGLV).

This sequence belongs to the OXA1/ALB3/YidC family. Type 1 subfamily. As to quaternary structure, interacts with the Sec translocase complex via SecD. Specifically interacts with transmembrane segments of nascent integral membrane proteins during membrane integration.

The protein resides in the cell inner membrane. Its function is as follows. Required for the insertion and/or proper folding and/or complex formation of integral membrane proteins into the membrane. Involved in integration of membrane proteins that insert both dependently and independently of the Sec translocase complex, as well as at least some lipoproteins. Aids folding of multispanning membrane proteins. This is Membrane protein insertase YidC from Francisella tularensis subsp. mediasiatica (strain FSC147).